The following is a 427-amino-acid chain: Protein TIFY 6a (427 aa).

Basic and acidic residues predominate over residues 1 to 25; it reads MERDFLGAIGRKEEAAGKPEEHSDY. The tract at residues 1-33 is disordered; it reads MERDFLGAIGRKEEAAGKPEEHSDYRGGGGGAS. Residues 196 to 231 enclose the Tify domain; the sequence is QNPKVTQMTIFYDGLVNVFDNIPVEKAQELMLLASR. 2 stretches are compositionally biased toward polar residues: residues 293–303 and 317–327; these read LPKSSSSSNDS and PLSQASPSQPI. A disordered region spans residues 293–327; the sequence is LPKSSSSSNDSAGPKSGGLPLAVTPLSQASPSQPI. The short motif at 343 to 367 is the Jas element; that stretch reads PQARKASLARFLEKRKERVSSVAPY. The short motif at 345–352 is the Nuclear localization signal element; the sequence is ARKASLAR. The tract at residues 360-427 is disordered; the sequence is RVSSVAPYPS…QEPPSTKLQI (68 aa). Composition is skewed to polar residues over residues 369–402 and 411–427; these read SSKS…NNCE and RNIS…KLQI.

This sequence belongs to the TIFY/JAZ family. Ubiquitinated.

The protein resides in the nucleus. In terms of biological role, repressor of jasmonate responses. The sequence is that of Protein TIFY 6a from Oryza sativa subsp. indica (Rice).